Reading from the N-terminus, the 444-residue chain is C4-dicarboxylate transport protein 1 (444 aa).

The next 9 membrane-spanning stretches (helical) occupy residues 9-29 (SIFL…VGIP), 42-62 (FIKL…VNGI), 78-98 (SVIY…VVAY), 152-172 (ILQV…VGEQ), 190-210 (IMGM…AFTT), 221-241 (LGAL…AVLG), 307-327 (FSIY…TPLA), 354-374 (VILA…LVLV), and 380-400 (FMGI…TVTI).

The protein belongs to the dicarboxylate/amino acid:cation symporter (DAACS) (TC 2.A.23) family.

It localises to the cell inner membrane. In terms of biological role, responsible for the transport of dicarboxylates such as succinate, fumarate, and malate from the periplasm across the membrane. In Pseudomonas paraeruginosa (strain DSM 24068 / PA7) (Pseudomonas aeruginosa (strain PA7)), this protein is C4-dicarboxylate transport protein 1.